We begin with the raw amino-acid sequence, 287 residues long: Ethanolamine ammonia-lyase small subunit (287 aa).

Positions 168, 189, and 218 each coordinate adenosylcob(III)alamin.

The protein belongs to the EutC family. In terms of assembly, the basic unit is a heterodimer which dimerizes to form tetramers. The heterotetramers trimerize; 6 large subunits form a core ring with 6 small subunits projecting outwards. Requires adenosylcob(III)alamin as cofactor.

It is found in the bacterial microcompartment. It catalyses the reaction ethanolamine = acetaldehyde + NH4(+). It functions in the pathway amine and polyamine degradation; ethanolamine degradation. Functionally, catalyzes the deamination of various vicinal amino-alcohols to oxo compounds. Allows this organism to utilize ethanolamine as the sole source of nitrogen and carbon in the presence of external vitamin B12. The polypeptide is Ethanolamine ammonia-lyase small subunit (Pseudomonas syringae pv. tomato (strain ATCC BAA-871 / DC3000)).